Reading from the N-terminus, the 726-residue chain is DNA-directed RNA polymerase subunit beta N-terminal section (726 aa).

It belongs to the RNA polymerase beta chain family. As to quaternary structure, in plastids the minimal PEP RNA polymerase catalytic core is composed of four subunits: alpha, beta, beta', and beta''. When a (nuclear-encoded) sigma factor is associated with the core the holoenzyme is formed, which can initiate transcription.

It is found in the plastid. Its subcellular location is the chloroplast. It carries out the reaction RNA(n) + a ribonucleoside 5'-triphosphate = RNA(n+1) + diphosphate. DNA-dependent RNA polymerase catalyzes the transcription of DNA into RNA using the four ribonucleoside triphosphates as substrates. The sequence is that of DNA-directed RNA polymerase subunit beta N-terminal section (rpoB1) from Tetradesmus obliquus (Green alga).